A 444-amino-acid polypeptide reads, in one-letter code: UPF0053 protein YhdP (444 aa).

One can recognise a CNNM transmembrane domain in the interval 1-201 (MDIVNLILVA…YKSGEINQSE (201 aa)). Transmembrane regions (helical) follow at residues 7–27 (ILVA…FAII), 61–81 (ACQL…ESTI), and 101–121 (VISF…VGEL). CBS domains follow at residues 220-282 (MIPR…SVDS) and 284-344 (ISQF…IRDE).

Belongs to the UPF0053 family.

The protein resides in the cell membrane. The polypeptide is UPF0053 protein YhdP (yhdP) (Bacillus subtilis (strain 168)).